A 257-amino-acid chain; its full sequence is UPF0246 protein BAV2675 (257 aa).

This sequence belongs to the UPF0246 family.

This is UPF0246 protein BAV2675 from Bordetella avium (strain 197N).